A 56-amino-acid polypeptide reads, in one-letter code: Large ribosomal subunit protein bL33A (56 aa).

The protein belongs to the bacterial ribosomal protein bL33 family.

This is Large ribosomal subunit protein bL33A from Cutibacterium acnes (strain DSM 16379 / KPA171202) (Propionibacterium acnes).